Consider the following 440-residue polypeptide: Tyrosine--tRNA ligase (440 aa).

Tyr-46 is an L-tyrosine binding site. Positions 51–60 (PTAASLHIGN) match the 'HIGH' region motif. Tyr-181 and Gln-185 together coordinate L-tyrosine. The 'KMSKS' region signature appears at 241 to 245 (KFGKS). Lys-244 is an ATP binding site. Residues 373–439 (DRVIDAAQAA…GKKALGAVEN (67 aa)) form the S4 RNA-binding domain.

The protein belongs to the class-I aminoacyl-tRNA synthetase family. TyrS type 1 subfamily. In terms of assembly, homodimer.

The protein localises to the cytoplasm. It carries out the reaction tRNA(Tyr) + L-tyrosine + ATP = L-tyrosyl-tRNA(Tyr) + AMP + diphosphate + H(+). Catalyzes the attachment of tyrosine to tRNA(Tyr) in a two-step reaction: tyrosine is first activated by ATP to form Tyr-AMP and then transferred to the acceptor end of tRNA(Tyr). The polypeptide is Tyrosine--tRNA ligase (Bifidobacterium longum (strain NCC 2705)).